The sequence spans 321 residues: Aspartate carbamoyltransferase catalytic subunit (321 aa).

Arginine 64 and threonine 65 together coordinate carbamoyl phosphate. Lysine 92 is an L-aspartate binding site. The carbamoyl phosphate site is built by arginine 114, histidine 144, and glutamine 147. Arginine 177 and arginine 232 together coordinate L-aspartate. 2 residues coordinate carbamoyl phosphate: glycine 273 and proline 274.

It belongs to the aspartate/ornithine carbamoyltransferase superfamily. ATCase family. As to quaternary structure, heterododecamer (2C3:3R2) of six catalytic PyrB chains organized as two trimers (C3), and six regulatory PyrI chains organized as three dimers (R2).

It carries out the reaction carbamoyl phosphate + L-aspartate = N-carbamoyl-L-aspartate + phosphate + H(+). The protein operates within pyrimidine metabolism; UMP biosynthesis via de novo pathway; (S)-dihydroorotate from bicarbonate: step 2/3. Its function is as follows. Catalyzes the condensation of carbamoyl phosphate and aspartate to form carbamoyl aspartate and inorganic phosphate, the committed step in the de novo pyrimidine nucleotide biosynthesis pathway. The polypeptide is Aspartate carbamoyltransferase catalytic subunit (Alkalilimnicola ehrlichii (strain ATCC BAA-1101 / DSM 17681 / MLHE-1)).